The chain runs to 541 residues: Arginine--tRNA ligase (541 aa).

The 'HIGH' region motif lies at Ala-119–His-129.

The protein belongs to the class-I aminoacyl-tRNA synthetase family. In terms of assembly, monomer.

Its subcellular location is the cytoplasm. The catalysed reaction is tRNA(Arg) + L-arginine + ATP = L-arginyl-tRNA(Arg) + AMP + diphosphate. The sequence is that of Arginine--tRNA ligase from Helicobacter acinonychis (strain Sheeba).